Here is a 111-residue protein sequence, read N- to C-terminus: Thiosulfate sulfurtransferase GlpE (111 aa).

The Rhodanese domain maps to 16 to 104 (QTENAVLLDV…WQRAGLPMET (89 aa)). Residue C64 is the Cysteine persulfide intermediate of the active site.

This sequence belongs to the GlpE family.

The protein localises to the cytoplasm. It catalyses the reaction thiosulfate + hydrogen cyanide = thiocyanate + sulfite + 2 H(+). The enzyme catalyses thiosulfate + [thioredoxin]-dithiol = [thioredoxin]-disulfide + hydrogen sulfide + sulfite + 2 H(+). Transferase that catalyzes the transfer of sulfur from thiosulfate to thiophilic acceptors such as cyanide or dithiols. May function in a CysM-independent thiosulfate assimilation pathway by catalyzing the conversion of thiosulfate to sulfite, which can then be used for L-cysteine biosynthesis. The sequence is that of Thiosulfate sulfurtransferase GlpE from Actinobacillus succinogenes (strain ATCC 55618 / DSM 22257 / CCUG 43843 / 130Z).